Consider the following 274-residue polypeptide: tRNA pseudouridine synthase A (274 aa).

Asp-51 (nucleophile) is an active-site residue. Tyr-109 lines the substrate pocket.

The protein belongs to the tRNA pseudouridine synthase TruA family. In terms of assembly, homodimer.

The enzyme catalyses uridine(38/39/40) in tRNA = pseudouridine(38/39/40) in tRNA. Functionally, formation of pseudouridine at positions 38, 39 and 40 in the anticodon stem and loop of transfer RNAs. The sequence is that of tRNA pseudouridine synthase A from Acidovorax sp. (strain JS42).